Consider the following 304-residue polypeptide: N-carbamoyl-D-amino acid hydrolase (304 aa).

The 272-residue stretch at 5 to 276 (MILAVGQQGP…DEVITAAVDL (272 aa)) folds into the CN hydrolase domain. Active-site residues include glutamate 47, lysine 127, and cysteine 172.

The enzyme catalyses an N-carbamoyl-D-amino acid + H2O + 2 H(+) = a D-alpha-amino acid + NH4(+) + CO2. Its function is as follows. The enzyme catalyzes the hydrolysis of N-carbamoyl-D-amino acids to the corresponding which are useful intermediates in the preparation of beta-lactam antibiotics. Industrial production of beta-lactam antibiotics is now being developed using this enzyme. This is N-carbamoyl-D-amino acid hydrolase from Agrobacterium sp. (strain KNK712).